The following is a 540-amino-acid chain: FAD-binding monooxygenase lolF1 (540 aa).

Residues 43–46 (VWRE) and 55–58 (DSLF) each bind FAD. NADP(+) is bound by residues 53–55 (AVD), 182–188 (TGPSGVQ), and 205–206 (QS).

This sequence belongs to the FAD-binding monooxygenase family. It depends on FAD as a cofactor.

It functions in the pathway alkaloid biosynthesis. Functionally, FAD-binding monooxygenase; part of the gene cluster that mediates the biosynthesis of loline alkaloids, potent insecticidal agents composed of a pyrrolizidine ring system and an uncommon ether bridge linking carbons 2 and 7. Lolines are structurally differentiated by the various modifications of the L-amino group and include norloline, loline, N-methylloline, N-acetylloline, N-acetylnorloline, and N-formylloline. The first committed step is the condensation of O-acetyl-L-homoserine (derived from L-aspartic acid) and L-proline, probably catalyzed by the gamma-type pyridoxal 5'-phosphate(PLP)-dependent enzyme lolC, to give the diamino diacid, NACPP. Ensuing cyclization, decarboxylation, and acetylation steps yield 1-exo-acetamidopyrrolizidine (AcAP). LolO is required for installation of the ether bridge upon the pathway intermediate, 1-exo-acetamidopyrrolizidine (AcAP). In sequential 2-oxoglutarate- and O(2)-consuming steps, lolO removes hydrogens from C2 and C7 of AcAP to form both carbon-oxygen bonds in N-acetylnorloline (NANL), the precursor to all other lolines. The enzymes lolD, lolE, lolF and lolT have also been proposed to be involved in the ether-bridge installation. Further processing of the exocyclic moiety of NANL by fungal N-acetamidase (LolN), methyltransferase (LolM), and cytochrome P450 (LolP) enzymes, with occasional involvement of a plant acetyltransferase, generates the other known lolines. LolN transforms NANL to norlonine which is monomethylated and dimethylated to respectively lonine and N-methyllonine (NML) by lolM. LolP catalyzes hydroxylation of the methyl group in N-methylloline (NML) and further oxygenation to N-formylloline (NFL). A plant acetyltransferase is responsible for the acetylation of loline to form N-acetylloline (NAL). LolA might interact with aspartate kinase to prevent feedback inhibition of its activity by these end products and thereby promote production of L-homoserine from L-aspartate. The sequence is that of FAD-binding monooxygenase lolF1 from Epichloe uncinata (Endophyte fungus).